A 92-amino-acid chain; its full sequence is YcgL domain-containing protein Sfri_1738 (92 aa).

In terms of domain architecture, YcgL spans 1 to 85 (MICAVYKSGR…PQINLLEQHK (85 aa)).

This is YcgL domain-containing protein Sfri_1738 from Shewanella frigidimarina (strain NCIMB 400).